Reading from the N-terminus, the 408-residue chain is Peptidase T (408 aa).

Zn(2+) is bound at residue His78. Asp80 is a catalytic residue. Asp140 serves as a coordination point for Zn(2+). The active-site Proton acceptor is Glu173. Zn(2+) is bound by residues Glu174, Asp196, and His379.

It belongs to the peptidase M20B family. Requires Zn(2+) as cofactor.

Its subcellular location is the cytoplasm. It carries out the reaction Release of the N-terminal residue from a tripeptide.. Cleaves the N-terminal amino acid of tripeptides. This chain is Peptidase T, found in Salmonella arizonae (strain ATCC BAA-731 / CDC346-86 / RSK2980).